The chain runs to 102 residues: NADH-quinone oxidoreductase subunit K (102 aa).

A run of 3 helical transmembrane segments spans residues 6–26 (LEHGLAVAGVLFCLGLVGLMV), 30–50 (ILFVLMSLEIMMNAAALAFVV), and 62–82 (VMFILVISLAAAEASIGLAIL).

The protein belongs to the complex I subunit 4L family. NDH-1 is composed of 13 different subunits. Subunits NuoA, H, J, K, L, M, N constitute the membrane sector of the complex.

It is found in the cell inner membrane. It catalyses the reaction a quinone + NADH + 5 H(+)(in) = a quinol + NAD(+) + 4 H(+)(out). Functionally, NDH-1 shuttles electrons from NADH, via FMN and iron-sulfur (Fe-S) centers, to quinones in the respiratory chain. The immediate electron acceptor for the enzyme in this species is believed to be ubiquinone. Couples the redox reaction to proton translocation (for every two electrons transferred, four hydrogen ions are translocated across the cytoplasmic membrane), and thus conserves the redox energy in a proton gradient. The protein is NADH-quinone oxidoreductase subunit K of Pseudomonas syringae pv. tomato (strain ATCC BAA-871 / DC3000).